The primary structure comprises 195 residues: Pyridoxal 5'-phosphate synthase subunit PdxT (195 aa).

Glycine 46–serine 48 serves as a coordination point for L-glutamine. Catalysis depends on cysteine 78, which acts as the Nucleophile. L-glutamine is bound by residues arginine 105 and isoleucine 133–arginine 134. Catalysis depends on charge relay system residues histidine 169 and glutamate 171.

The protein belongs to the glutaminase PdxT/SNO family. In the presence of PdxS, forms a dodecamer of heterodimers. Only shows activity in the heterodimer.

It carries out the reaction aldehydo-D-ribose 5-phosphate + D-glyceraldehyde 3-phosphate + L-glutamine = pyridoxal 5'-phosphate + L-glutamate + phosphate + 3 H2O + H(+). It catalyses the reaction L-glutamine + H2O = L-glutamate + NH4(+). It functions in the pathway cofactor biosynthesis; pyridoxal 5'-phosphate biosynthesis. Its function is as follows. Catalyzes the hydrolysis of glutamine to glutamate and ammonia as part of the biosynthesis of pyridoxal 5'-phosphate. The resulting ammonia molecule is channeled to the active site of PdxS. The sequence is that of Pyridoxal 5'-phosphate synthase subunit PdxT from Shouchella clausii (strain KSM-K16) (Alkalihalobacillus clausii).